Reading from the N-terminus, the 453-residue chain is Serine/threonine-protein phosphatase 2A regulatory subunit B'' subunit gamma (453 aa).

EF-hand domains are found at residues 273–308 (PSAL…TMTN) and 341–376 (KEPA…IQEL). Positions 286, 288, 290, 292, and 297 each coordinate Ca(2+).

Interacts with MCM3AP/GANP, PPP5C, and the phosphatase 2A core enzyme composed of the PPP2CA catalytic subunit and the constant regulatory subunit PPP2R1A. Finds in a complex with ABCB1, TFPI2 and PPP2R3C; leading to the dephosphorylation of ABCB1. As to expression, expressed in all tissues tested including heart, brain, spleen, thymus, lung, liver, kidney and testis.

It is found in the nucleus. Its subcellular location is the cytoplasm. Its function is as follows. May regulate MCM3AP phosphorylation through phosphatase recruitment. May act as a negative regulator of ABCB1 expression and function through the dephosphorylation of ABCB1 by TFPI2/PPP2R3C complex. May play a role in the activation-induced cell death of B-cells. The polypeptide is Serine/threonine-protein phosphatase 2A regulatory subunit B'' subunit gamma (Ppp2r3c) (Mus musculus (Mouse)).